The primary structure comprises 304 residues: N-acetyllactosaminide alpha-2,3-sialyltransferase (304 aa).

CMP-N-acetyl-beta-neuraminate contacts are provided by residues 221–225, 242–243, and 262–263; these read FPHPA, FE, and SS. H223 serves as the catalytic Proton donor.

It belongs to the glycosyltransferase 52 family.

It carries out the reaction a beta-D-galactosyl-(1-&gt;4)-N-acetyl-beta-D-glucosaminyl derivative + CMP-N-acetyl-beta-neuraminate = an N-acetyl-alpha-neuraminyl-(2-&gt;3)-beta-D-galactosyl-(1-&gt;4)-N-acetyl-beta-D-glucosaminyl derivative + CMP + H(+). Its pathway is bacterial outer membrane biogenesis; lipooligosaccharide biosynthesis. Functionally, catalyzes the transfer of sialic acid from the substrate CMP-N-acetylneuraminate to the terminal galactose residue of the N-acetyllactosamine moiety of surface lipooligosaccharide (LOS). Thus, functions in the sialylation of LOS, which plays a role in the evasion of the host immune response. The sequence is that of N-acetyllactosaminide alpha-2,3-sialyltransferase from Haemophilus influenzae (strain ATCC 51907 / DSM 11121 / KW20 / Rd).